The following is a 467-amino-acid chain: Siroheme synthase (467 aa).

The tract at residues 1–203 is precorrin-2 dehydrogenase /sirohydrochlorin ferrochelatase; sequence METLPIFMKL…GQEEAARHAM (203 aa). NAD(+) contacts are provided by residues 22–23 and 43–44; these read EI and PE. Residue Ser-128 is modified to Phosphoserine. The segment at 216-467 is uroporphyrinogen-III C-methyltransferase; the sequence is GEVYLVGGGP…APSPEVVSAG (252 aa). Pro-225 contacts S-adenosyl-L-methionine. The active-site Proton acceptor is Asp-248. Lys-270 serves as the catalytic Proton donor. S-adenosyl-L-methionine is bound by residues 301–303, Ile-306, 331–332, Met-383, and Gly-412; these read GGD and TA.

In the N-terminal section; belongs to the precorrin-2 dehydrogenase / sirohydrochlorin ferrochelatase family. The protein in the C-terminal section; belongs to the precorrin methyltransferase family.

It catalyses the reaction uroporphyrinogen III + 2 S-adenosyl-L-methionine = precorrin-2 + 2 S-adenosyl-L-homocysteine + H(+). The catalysed reaction is precorrin-2 + NAD(+) = sirohydrochlorin + NADH + 2 H(+). The enzyme catalyses siroheme + 2 H(+) = sirohydrochlorin + Fe(2+). It participates in cofactor biosynthesis; adenosylcobalamin biosynthesis; precorrin-2 from uroporphyrinogen III: step 1/1. Its pathway is cofactor biosynthesis; adenosylcobalamin biosynthesis; sirohydrochlorin from precorrin-2: step 1/1. It functions in the pathway porphyrin-containing compound metabolism; siroheme biosynthesis; precorrin-2 from uroporphyrinogen III: step 1/1. The protein operates within porphyrin-containing compound metabolism; siroheme biosynthesis; siroheme from sirohydrochlorin: step 1/1. It participates in porphyrin-containing compound metabolism; siroheme biosynthesis; sirohydrochlorin from precorrin-2: step 1/1. In terms of biological role, multifunctional enzyme that catalyzes the SAM-dependent methylations of uroporphyrinogen III at position C-2 and C-7 to form precorrin-2 via precorrin-1. Then it catalyzes the NAD-dependent ring dehydrogenation of precorrin-2 to yield sirohydrochlorin. Finally, it catalyzes the ferrochelation of sirohydrochlorin to yield siroheme. The sequence is that of Siroheme synthase from Methylobacillus flagellatus (strain ATCC 51484 / DSM 6875 / VKM B-1610 / KT).